Here is a 162-residue protein sequence, read N- to C-terminus: ATP synthase subunit b (162 aa).

A helical membrane pass occupies residues 6-26 (PDIGLLFWMLLSFGIVFFVAA).

The protein belongs to the ATPase B chain family. In terms of assembly, F-type ATPases have 2 components, F(1) - the catalytic core - and F(0) - the membrane proton channel. F(1) has five subunits: alpha(3), beta(3), gamma(1), delta(1), epsilon(1). F(0) has three main subunits: a(1), b(2) and c(10-14). The alpha and beta chains form an alternating ring which encloses part of the gamma chain. F(1) is attached to F(0) by a central stalk formed by the gamma and epsilon chains, while a peripheral stalk is formed by the delta and b chains.

The protein resides in the cell inner membrane. Functionally, f(1)F(0) ATP synthase produces ATP from ADP in the presence of a proton or sodium gradient. F-type ATPases consist of two structural domains, F(1) containing the extramembraneous catalytic core and F(0) containing the membrane proton channel, linked together by a central stalk and a peripheral stalk. During catalysis, ATP synthesis in the catalytic domain of F(1) is coupled via a rotary mechanism of the central stalk subunits to proton translocation. In terms of biological role, component of the F(0) channel, it forms part of the peripheral stalk, linking F(1) to F(0). The chain is ATP synthase subunit b from Azobacteroides pseudotrichonymphae genomovar. CFP2.